The chain runs to 447 residues: 3-O-methyltransferase 2 (447 aa).

S-adenosyl-L-methionine-binding positions include 264 to 265 (GG), Asp287, 318 to 319 (DF), and Arg334. The Proton acceptor role is filled by His338.

Belongs to the class I-like SAM-binding methyltransferase superfamily. Cation-independent O-methyltransferase family. COMT subfamily.

Its function is as follows. S-adenosyl-L-methionine-dependent methyltransferase that preferentially catalyzes the methylation of 3-OH phenolic compounds like isovanillic acid and 3-OH-4-Met cinnamic acid. May play a role in promoting lignin degradation by methylating and inactivating free-hydroxyl phenolic compounds, products of lignin cleavage which are known inhibitors of lignin peroxidases. This is 3-O-methyltransferase 2 from Phanerochaete chrysosporium (strain RP-78 / ATCC MYA-4764 / FGSC 9002) (White-rot fungus).